The chain runs to 65 residues: Putative beta-neurotoxin RjAa12 (65 aa).

Residues 1–64 (KEGYPVGRDG…VWDSSTNKCG (64 aa)) form the LCN-type CS-alpha/beta domain. 4 disulfide bridges follow: cysteine 11/cysteine 63, cysteine 15/cysteine 37, cysteine 22/cysteine 44, and cysteine 26/cysteine 46.

It belongs to the long (4 C-C) scorpion toxin superfamily. Sodium channel inhibitor family. Beta subfamily. In terms of tissue distribution, expressed by the venom gland.

The protein localises to the secreted. Its function is as follows. Beta toxins bind voltage-independently at site-4 of sodium channels (Nav) and shift the voltage of activation toward more negative potentials thereby affecting sodium channel activation and promoting spontaneous and repetitive firing. In Rhopalurus junceus (Caribbean blue scorpion), this protein is Putative beta-neurotoxin RjAa12.